Reading from the N-terminus, the 151-residue chain is Large ribosomal subunit protein uL22 (151 aa).

It belongs to the universal ribosomal protein uL22 family. In terms of assembly, part of the 50S ribosomal subunit.

In terms of biological role, this protein binds specifically to 23S rRNA. It makes multiple contacts with different domains of the 23S rRNA in the assembled 50S subunit and ribosome. Its function is as follows. The globular domain of the protein is located near the polypeptide exit tunnel on the outside of the subunit, while an extended beta-hairpin is found that lines the wall of the exit tunnel in the center of the 70S ribosome. In Thermofilum pendens (strain DSM 2475 / Hrk 5), this protein is Large ribosomal subunit protein uL22.